The chain runs to 216 residues: UPF0502 protein Pmen_2627 (216 aa).

This sequence belongs to the UPF0502 family.

This Ectopseudomonas mendocina (strain ymp) (Pseudomonas mendocina) protein is UPF0502 protein Pmen_2627.